A 600-amino-acid chain; its full sequence is Elongation factor 4 (600 aa).

In terms of domain architecture, tr-type G spans 5–187; that stretch reads SNIRNFSIIA…ALVERIPAPT (183 aa). GTP is bound by residues 17 to 22 and 134 to 137; these read DHGKST and NKID.

The protein belongs to the TRAFAC class translation factor GTPase superfamily. Classic translation factor GTPase family. LepA subfamily.

Its subcellular location is the cell inner membrane. It carries out the reaction GTP + H2O = GDP + phosphate + H(+). Its function is as follows. Required for accurate and efficient protein synthesis under certain stress conditions. May act as a fidelity factor of the translation reaction, by catalyzing a one-codon backward translocation of tRNAs on improperly translocated ribosomes. Back-translocation proceeds from a post-translocation (POST) complex to a pre-translocation (PRE) complex, thus giving elongation factor G a second chance to translocate the tRNAs correctly. Binds to ribosomes in a GTP-dependent manner. This is Elongation factor 4 from Psychrobacter sp. (strain PRwf-1).